The chain runs to 522 residues: GMP synthase [glutamine-hydrolyzing] (522 aa).

The Glutamine amidotransferase type-1 domain maps to 9-204; the sequence is KILILDFGAQ…VVDICGCQTL (196 aa). The active-site Nucleophile is the C86. Residues H178 and E180 contribute to the active site. The region spanning 205–397 is the GMPS ATP-PPase domain; the sequence is WTSANIIEDQ…LGLPHAMVYR (193 aa). 232–238 lines the ATP pocket; sequence SGGVDSS.

Homodimer.

The enzyme catalyses XMP + L-glutamine + ATP + H2O = GMP + L-glutamate + AMP + diphosphate + 2 H(+). Its pathway is purine metabolism; GMP biosynthesis; GMP from XMP (L-Gln route): step 1/1. In terms of biological role, catalyzes the synthesis of GMP from XMP. The protein is GMP synthase [glutamine-hydrolyzing] of Xylella fastidiosa (strain M23).